The following is a 551-amino-acid chain: ATP-dependent DNA helicase XPD (551 aa).

One can recognise a Helicase ATP-binding domain in the interval 1–228 (MLKLRDWQEK…KLLNQLREVV (228 aa)). 29 to 36 (APTGSGKT) is an ATP binding site. [4Fe-4S] cluster-binding residues include Cys88, Cys102, Cys105, and Cys137. The DEAH box motif lies at 180–183 (DEAH).

Belongs to the helicase family. RAD3/XPD subfamily. In terms of assembly, monomer. The cofactor is [4Fe-4S] cluster.

It carries out the reaction Couples ATP hydrolysis with the unwinding of duplex DNA at the replication fork by translocating in the 5'-3' direction. This creates two antiparallel DNA single strands (ssDNA). The leading ssDNA polymer is the template for DNA polymerase III holoenzyme which synthesizes a continuous strand.. It catalyses the reaction ATP + H2O = ADP + phosphate + H(+). Functionally, ATP-dependent 5'-3' DNA helicase. Thought to be involved in nucleotide excision repair (NER) of DNA. This Sulfolobus acidocaldarius (strain ATCC 33909 / DSM 639 / JCM 8929 / NBRC 15157 / NCIMB 11770) protein is ATP-dependent DNA helicase XPD.